Reading from the N-terminus, the 323-residue chain is Methionyl-tRNA formyltransferase (323 aa).

Position 115–118 (115–118) interacts with (6S)-5,6,7,8-tetrahydrofolate; sequence SLLP.

It belongs to the Fmt family.

It carries out the reaction L-methionyl-tRNA(fMet) + (6R)-10-formyltetrahydrofolate = N-formyl-L-methionyl-tRNA(fMet) + (6S)-5,6,7,8-tetrahydrofolate + H(+). Functionally, attaches a formyl group to the free amino group of methionyl-tRNA(fMet). The formyl group appears to play a dual role in the initiator identity of N-formylmethionyl-tRNA by promoting its recognition by IF2 and preventing the misappropriation of this tRNA by the elongation apparatus. The chain is Methionyl-tRNA formyltransferase from Blochmanniella floridana.